Reading from the N-terminus, the 266-residue chain is Mediator of RNA polymerase II transcription subunit 18 (266 aa).

The protein belongs to the Mediator complex subunit 18 family. In terms of assembly, component of the Mediator complex.

Its subcellular location is the nucleus. In terms of biological role, component of the Mediator complex, a coactivator involved in the regulated transcription of nearly all RNA polymerase II-dependent genes. Mediator functions as a bridge to convey information from gene-specific regulatory proteins to the basal RNA polymerase II transcription machinery. Mediator is recruited to promoters by direct interactions with regulatory proteins and serves as a scaffold for the assembly of a functional preinitiation complex with RNA polymerase II and the general transcription factors. The polypeptide is Mediator of RNA polymerase II transcription subunit 18 (SRB5) (Candida glabrata (strain ATCC 2001 / BCRC 20586 / JCM 3761 / NBRC 0622 / NRRL Y-65 / CBS 138) (Yeast)).